The sequence spans 368 residues: Protein PXR1 (368 aa).

The disordered stretch occupies residues 1–24 (MGLAGAKNKRKLGNDPNNTKWSRN). Residues 15-24 (DPNNTKWSRN) are compositionally biased toward polar residues. The region spanning 25 to 79 (TDTFGQKILRAQGWQPGEYLGAKDAAHAEWHTEANTTHIRVTLKDDTLGLGAKRN) is the G-patch domain. The tract at residues 144 to 337 (TPDEEAEEIP…GYSTPIPTGS (194 aa)) is disordered. Positions 176 to 186 (RRSDKEDDKLG) are enriched in basic and acidic residues. Basic residues-rich tracts occupy residues 187–196 (KKEKKSKKRK) and 257–277 (DKKR…KKEK). Residues 310 to 337 (PSSAPTPTDSNSSTPTGSGYSTPIPTGS) show a composition bias toward low complexity.

It belongs to the PINX1 family.

Its subcellular location is the nucleus. The protein localises to the nucleolus. Involved in rRNA-processing at A0, A1 and A2 sites and negatively regulates telomerase. This Chaetomium globosum (strain ATCC 6205 / CBS 148.51 / DSM 1962 / NBRC 6347 / NRRL 1970) (Soil fungus) protein is Protein PXR1 (PXR1).